Here is a 64-residue protein sequence, read N- to C-terminus: Large ribosomal subunit protein bL35 (64 aa).

The protein belongs to the bacterial ribosomal protein bL35 family.

This is Large ribosomal subunit protein bL35 from Vibrio atlanticus (strain LGP32) (Vibrio splendidus (strain Mel32)).